The following is a 908-amino-acid chain: DNA (cytosine-5)-methyltransferase 3A (908 aa).

Residues 1–13 (MPSSGPGDTSSSS) show a composition bias toward low complexity. Disordered regions lie at residues 1-183 (MPSS…PMPR) and 226-281 (NQAS…PEYE). The span at 14–37 (LEREDDRKEGEEQEENRGKEERQE) shows a compositional bias: basic and acidic residues. Residues 44–54 (KVGRPGRKRKH) show a composition bias toward basic residues. Residues 69–80 (TTKSQPMAQDSG) show a composition bias toward polar residues. Residue S102 is modified to Phosphoserine. The span at 110-124 (GAPAEGEGTETPPEA) shows a compositional bias: low complexity. Position 120 is a phosphothreonine (T120). K158 participates in a covalent cross-link: Glycyl lysine isopeptide (Lys-Gly) (interchain with G-Cter in SUMO2). The residue at position 167 (R167) is an Omega-N-methylarginine. The interaction with DNMT1 and DNMT3B stretch occupies residues 195–399 (SKRKRDEWLA…DSGKAVEVQN (205 aa)). Residues S239 and S251 each carry the phosphoserine modification. Over residues 242–256 (AVQQPTDPASPTVAT) the composition is skewed to polar residues. Phosphothreonine is present on T257. Positions 265–275 (AGDKNATKAAD) are enriched in basic and acidic residues. Residues 288 to 346 (IGELVWGKLRGFSWWPGRIVSWWMTGRSRAAEGTRWVMWFGDGKFSVVCVEKLMPLSSF) enclose the PWWP domain. Residues S386 and S389 each carry the phosphoserine modification. The tract at residues 443-462 (AYAPPPPAKKPRKSTTEKPK) is disordered. The ADD domain maps to 478–610 (EVRQKCRNIE…LQMFFANNHD (133 aa)). A GATA-type; atypical zinc finger spans residues 489-519 (ICISCGSLNVTLEHPLFIGGMCQNCKNCFLE). The segment at 490 to 582 (CISCGSLNVT…KEDPWNCYMC (93 aa)) is interaction with the PRC2/EED-EZH2 complex. A PHD-type; atypical zinc finger spans residues 530–586 (QSYCTICCGGREVLMCGNNNCCRCFCVECVDLLVGPGAAQAAIKEDPWNCYMCGHKG). The 279-residue stretch at 630–908 (IRVLSLFDGI…APLKEYFACV (279 aa)) folds into the SAM-dependent MTase C5-type domain. S-adenosyl-L-methionine is bound by residues 637 to 641 (DGIAT), E660, and 682 to 684 (DVR). C706 is an active-site residue. Position 706 is an S-methylcysteine; by autocatalysis (C706). 887 to 889 (RSW) serves as a coordination point for S-adenosyl-L-methionine.

Belongs to the class I-like SAM-binding methyltransferase superfamily. C5-methyltransferase family. In terms of assembly, heterotetramer composed of 1 DNMT3A homodimer and 2 DNMT3L subunits (DNMT3L-DNMT3A-DNMT3A-DNMT3L). Interacts with DNMT1 and DNMT3B. Interacts with MPHOSPH8. Interacts with histone H3 that is not methylated at 'Lys-4' (H3K4). Binds the ZBTB18 transcriptional repressor. Interacts with SETDB1. Associates with HDAC1 through its ADD domain. Interacts with UHRF1. Interacts with the PRC2/EED-EZH2 complex. Interacts with UBC9, PIAS1 and PIAS2. Interacts with SPOCD1. Interacts with ZNF263; recruited to the SIX3 promoter along with other proteins involved in chromatin modification and transcriptional corepression where it contributes to transcriptional repression. In terms of processing, auto-methylated at Cys-706: auto-methylation takes place in absence of DNA substrate and inactivates the DNA methyltransferase activity. Inactivation by auto-methylation may be used to inactivate unused DNA methyltransferases in the cell. Sumoylated; sumoylation disrupts the ability to interact with histone deacetylases (HDAC1 and HDAC2) and repress transcription. Isoform 1 is expressed ubiquitously at low levels. Expression of isoform 2 is restricted to tissues containing cells which are undergoing active de novo methylation, including spleen, testis and thymus.

Its subcellular location is the nucleus. It is found in the chromosome. The protein localises to the cytoplasm. It carries out the reaction a 2'-deoxycytidine in DNA + S-adenosyl-L-methionine = a 5-methyl-2'-deoxycytidine in DNA + S-adenosyl-L-homocysteine + H(+). The catalysed reaction is L-cysteinyl-[protein] + S-adenosyl-L-methionine = S-methyl-L-cysteinyl-[protein] + S-adenosyl-L-homocysteine + H(+). With respect to regulation, activated by binding to the regulatory factor DNMT3L. Auto-methylation at Cys-706 in absence of DNA inactivates the DNA methyltransferase activity. Its function is as follows. Required for genome-wide de novo methylation and is essential for the establishment of DNA methylation patterns during development. DNA methylation is coordinated with methylation of histones. It modifies DNA in a non-processive manner and also methylates non-CpG sites. May preferentially methylate DNA linker between 2 nucleosomal cores and is inhibited by histone H1. Plays a role in paternal and maternal imprinting. Required for methylation of most imprinted loci in germ cells. Acts as a transcriptional corepressor for ZBTB18. Recruited to trimethylated 'Lys-36' of histone H3 (H3K36me3) sites. Can actively repress transcription through the recruitment of HDAC activity. Also has weak auto-methylation activity on Cys-706 in absence of DNA. The sequence is that of DNA (cytosine-5)-methyltransferase 3A from Mus musculus (Mouse).